Consider the following 96-residue polypeptide: Co-chaperonin GroES (96 aa).

This sequence belongs to the GroES chaperonin family. Heptamer of 7 subunits arranged in a ring. Interacts with the chaperonin GroEL.

It is found in the cytoplasm. Together with the chaperonin GroEL, plays an essential role in assisting protein folding. The GroEL-GroES system forms a nano-cage that allows encapsulation of the non-native substrate proteins and provides a physical environment optimized to promote and accelerate protein folding. GroES binds to the apical surface of the GroEL ring, thereby capping the opening of the GroEL channel. The chain is Co-chaperonin GroES from Leptospira borgpetersenii serovar Hardjo-bovis (strain JB197).